Reading from the N-terminus, the 81-residue chain is MAHSVKIYDTCIGCTQCVRACPTDVLEMISWDGCKANQIASAPRTEDCVGCKRCESACPTDFLSVRVYLGSETTRSMGLAY.

4Fe-4S ferredoxin-type domains lie at alanine 2–tryptophan 31 and isoleucine 39–tyrosine 68. [4Fe-4S] cluster-binding residues include cysteine 11, cysteine 14, cysteine 17, cysteine 21, cysteine 48, cysteine 51, cysteine 54, and cysteine 58.

As to quaternary structure, the eukaryotic PSI reaction center is composed of at least 11 subunits. Requires [4Fe-4S] cluster as cofactor.

Its subcellular location is the plastid. The protein localises to the chloroplast thylakoid membrane. The enzyme catalyses reduced [plastocyanin] + hnu + oxidized [2Fe-2S]-[ferredoxin] = oxidized [plastocyanin] + reduced [2Fe-2S]-[ferredoxin]. Apoprotein for the two 4Fe-4S centers FA and FB of photosystem I (PSI); essential for photochemical activity. FB is the terminal electron acceptor of PSI, donating electrons to ferredoxin. The C-terminus interacts with PsaA/B/D and helps assemble the protein into the PSI complex. Required for binding of PsaD and PsaE to PSI. PSI is a plastocyanin-ferredoxin oxidoreductase, converting photonic excitation into a charge separation, which transfers an electron from the donor P700 chlorophyll pair to the spectroscopically characterized acceptors A0, A1, FX, FA and FB in turn. The sequence is that of Photosystem I iron-sulfur center (psaC) from Anthoceros angustus (Hornwort).